A 318-amino-acid chain; its full sequence is Methionyl-tRNA formyltransferase (318 aa).

Residue 110–113 (SLLP) participates in (6S)-5,6,7,8-tetrahydrofolate binding.

Belongs to the Fmt family.

The enzyme catalyses L-methionyl-tRNA(fMet) + (6R)-10-formyltetrahydrofolate = N-formyl-L-methionyl-tRNA(fMet) + (6S)-5,6,7,8-tetrahydrofolate + H(+). In terms of biological role, attaches a formyl group to the free amino group of methionyl-tRNA(fMet). The formyl group appears to play a dual role in the initiator identity of N-formylmethionyl-tRNA by promoting its recognition by IF2 and preventing the misappropriation of this tRNA by the elongation apparatus. In Ligilactobacillus salivarius (strain UCC118) (Lactobacillus salivarius), this protein is Methionyl-tRNA formyltransferase.